Consider the following 638-residue polypeptide: MTHTFAENYDVIVIGAGHAGVEAGLAASRMGCKTLLATINLDMVAFMPCNPSIGGSAKGIVVREIDALGGEMGRNIDKTYIQMKMLNMGKGPAVRALRAQADKAEYASEMKRTVERQENLTLRQTMIDEILVEDGKVIGVRTATNQKFSAKAVVVTTGTALRGEIIIGDLKYSSGPNNSLASITLADNLKELGLEIGRFKTGTPPRVNARTINYEDTEIQPGDEKPNHFSFLSKDEDYLLDQIPCWLTYTNATSHEIINSNLHRAPMFSGIVKGIGPRYCPSIEDKIVRFADKERHQLFLEPEGRNTDEIYVQGLSTSLPEDVQQDLIHSIKGLENAQMMRTGYAIEYDMVMPHQLRATLETKKISGLFTAGQTNGTSGYEEAAGQGIVAGINAALKVQGKPELILKRSDGYIGVMIDDLVTKGTVEPYRLLTSRAEYRLILRHDNADMRLTEIGRQVGLVDDERWQVFQIHKNQFDNEMKRLESIKLKPIKETNEKVVAMGFKPLTDALTAKEFMRRPDVTYADAVAFIGPAAEDLDAKTIELIETEVKYEGYIAKALDQVEKMKRMEEKRIPADIDWDDIDSIATEARQKFKLISPETIGQASRISGVNPADISILMVYLEGRSRSISKNKSKDSH.

Residues 15–20 (GAGHAG), isoleucine 127, and serine 182 contribute to the FAD site. 276–290 (GPRYCPSIEDKIVRF) provides a ligand contact to NAD(+). Residue glutamine 373 coordinates FAD.

This sequence belongs to the MnmG family. Homodimer. Heterotetramer of two MnmE and two MnmG subunits. FAD serves as cofactor.

It is found in the cytoplasm. Its function is as follows. NAD-binding protein involved in the addition of a carboxymethylaminomethyl (cmnm) group at the wobble position (U34) of certain tRNAs, forming tRNA-cmnm(5)s(2)U34. The chain is tRNA uridine 5-carboxymethylaminomethyl modification enzyme MnmG from Streptococcus suis (strain 98HAH33).